The primary structure comprises 688 residues: Transcription factor GTE9 (688 aa).

The interval 1–36 (MTERNGGFPGDYCFEAPGGDYDEGSDSPRVSEGSNC) is disordered. Residues 132-238 (TAVMLLMKQC…KFFEVRWKTL (107 aa)) form the Bromo domain. Residues 280 to 361 (ENVVDPAKRV…EHLREIQNKK (82 aa)) enclose the NET domain. A disordered region spans residues 423–505 (GNSLGSVSGD…AQNEKQLPPE (83 aa)). S478 is modified (phosphoserine). Positions 491–500 (QDGNSAQNEK) are enriched in polar residues. The segment at 505–688 (EKSYRAAILK…EIDIEEGEID (184 aa)) is transcription activation domain. Positions 534–613 (TRDPEKLQRE…QSVELNENAK (80 aa)) form a coiled coil. The disordered stretch occupies residues 660–688 (FMKQDEDEEEADPLTSPAPEIDIEEGEID).

In terms of assembly, interacts with BT1.

The protein localises to the nucleus. The sequence is that of Transcription factor GTE9 (GTE9) from Arabidopsis thaliana (Mouse-ear cress).